The sequence spans 759 residues: Tripartite motif-containing protein 46 (759 aa).

Residues 1 to 166 (MAEGEDMQTF…VERYRQSVSV (166 aa)) are required for proximal axon localization, axon formation and migration. The segment at 33–59 (CPVCQEMYKQPLVLPCTHNVCQACARE) adopts an RING-type 1; degenerate zinc-finger fold. The disordered stretch occupies residues 67-98 (IGHGGDPSSEPTSPASTPSTRSPRLSRRTLPK). Positions 73–89 (PSSEPTSPASTPSTRSP) are enriched in low complexity. The RING-type 2; degenerate zinc finger occupies 172 to 231 (CQLCKPPPLEATKGCTECRATFCNECFKLFHPWGTQKAQHEPTLPTLSFRPKGLMCPDHK). A B box-type zinc finger spans residues 222–263 (PKGLMCPDHKEEVTHYCKTCQRLVCQLCRVRRTHSGHKITPV). 4 residues coordinate Zn(2+): cysteine 227, histidine 230, cysteine 249, and histidine 255. A coiled-coil region spans residues 322-400 (AVLEEKRASL…RATEALQTFR (79 aa)). Serine 330 is modified (phosphoserine). In terms of domain architecture, COS spans 370–427 (LKETDQPCFVQAAKQLHNRIARATEALQTFRPAASSSFRHCQLDVGREMKLLTELSFL). A required for microtubule association, proximal axon localization and axon formation region spans residues 411-429 (QLDVGREMKLLTELSFLRV). Positions 429–528 (VPEAPVIDTQ…EDVHLHTPPA (100 aa)) constitute a Fibronectin type-III domain. The B30.2/SPRY domain maps to 526 to 747 (PPAPVLHFFL…LQEPVGTKPE (222 aa)). Phosphoserine is present on serine 627.

It belongs to the TRIM/RBCC family. Interacts with TUBB3 and TUBA4A. As to expression, expressed in the central nervous system, including pyramidal neurons and interneurons in the cortex and hippocampus and all neuronal cell types in the cerebral and cerebellar cortex, and in the peripheral nervous system, including the dorsal root ganglion neurons.

It localises to the cell projection. Its subcellular location is the axon. It is found in the cytoplasm. The protein resides in the cytoskeleton. Microtubule-associated protein that is involved in the formation of parallel microtubule bundles linked by cross-bridges in the proximal axon. Required for the uniform orientation and maintenance of the parallel microtubule fascicles, which are important for efficient cargo delivery and trafficking in axons. Thereby also required for proper axon formation, the establishment of neuronal polarity and proper neuronal migration. The chain is Tripartite motif-containing protein 46 (Trim46) from Mus musculus (Mouse).